Here is a 173-residue protein sequence, read N- to C-terminus: uncharacterized protein (173 aa).

Belongs to the ycf73 family.

It is found in the plastid. Its subcellular location is the chloroplast. This is an uncharacterized protein from Saccharum hybrid (Sugarcane).